A 449-amino-acid chain; its full sequence is C4-dicarboxylate transport protein 1 (449 aa).

Transmembrane regions (helical) follow at residues 16 to 38 (FLQVVIGLVIGVICGVGIPDLAV), 53 to 71 (MLIALIVFCVVVNGISGAG), 84 to 106 (VIYFEILTTIALVLGLVVAYSLG), 157 to 176 (ILQVLLFSVLFGSALNLVGE), 197 to 219 (GMIVRLAPLGVFGAVAFTTARYG), 229 to 251 (LVLVFYATCLVFVMAVLGSVLRL), 311 to 333 (GFSIYLTLAVVFIAHVTGTPLAM), and 358 to 380 (LVILAATLTAVPAIPVAGLVLVL).

This sequence belongs to the dicarboxylate/amino acid:cation symporter (DAACS) (TC 2.A.23) family.

The protein resides in the cell inner membrane. Responsible for the transport of dicarboxylates such as succinate, fumarate, and malate from the periplasm across the membrane. In Pseudomonas aeruginosa (strain ATCC 15692 / DSM 22644 / CIP 104116 / JCM 14847 / LMG 12228 / 1C / PRS 101 / PAO1), this protein is C4-dicarboxylate transport protein 1 (dctA1).